A 287-amino-acid chain; its full sequence is Nucleotide-binding protein GM21_3387 (287 aa).

8–15 (GLSGSGKS) provides a ligand contact to ATP. 59–62 (DIRS) lines the GTP pocket.

The protein belongs to the RapZ-like family.

Functionally, displays ATPase and GTPase activities. The sequence is that of Nucleotide-binding protein GM21_3387 from Geobacter sp. (strain M21).